The chain runs to 396 residues: MIISAASDYRAAAQRTLPPFLFHYIDGGAYAEYTLRRNVEDLSQVALRQRVLKNMSDLSLETTLFNETLSMPVALAPVGLCGMYARRGEVQAAAAADAKGIPFTLSTVSVCPIEEVAPTLKRPMWFQLYVLRDRGFMRNALERAKAAGCSTLVFTVDMPTPGARYRDAHSGMSGPNAAMRRYWQAVMHPKWAWDVGLNGRPHDLGNISAYLGKPTGLEDYIGWLANNFDPSISWKDLEWIREFWDGPMVIKGILDPEDARDAVRFGADGIVVSNHGGRQLDGVLSSARALPAIADAVKGDIAILADSGIRNGLDVVRMIALGADTVLLGRAYLYALATAGKAGVANLLDLIEKEMKVAMTLTGAKSISEISGDSLVQELGKSLPAALAPMSKGDAT.

Residues 1 to 380 (MIISAASDYR…SGDSLVQELG (380 aa)) enclose the FMN hydroxy acid dehydrogenase domain. Tyrosine 24 lines the substrate pocket. FMN-binding residues include serine 106 and glutamine 127. Residue tyrosine 129 participates in substrate binding. Residue threonine 155 participates in FMN binding. Residue arginine 164 participates in substrate binding. Lysine 251 contacts FMN. The active-site Proton acceptor is the histidine 275. Arginine 278 contacts substrate. 306-330 (DSGIRNGLDVVRMIALGADTVLLGR) lines the FMN pocket.

Belongs to the FMN-dependent alpha-hydroxy acid dehydrogenase family. Requires FMN as cofactor.

The protein resides in the cell inner membrane. The catalysed reaction is (S)-lactate + A = pyruvate + AH2. Functionally, catalyzes the conversion of L-lactate to pyruvate. Is coupled to the respiratory chain. In Salmonella arizonae (strain ATCC BAA-731 / CDC346-86 / RSK2980), this protein is L-lactate dehydrogenase.